The chain runs to 173 residues: Inorganic pyrophosphatase (173 aa).

3 residues coordinate substrate: lysine 28, arginine 42, and tyrosine 54. Aspartate 64, aspartate 69, and aspartate 101 together coordinate Mg(2+). Tyrosine 140 lines the substrate pocket.

This sequence belongs to the PPase family. In terms of assembly, homohexamer. Mg(2+) is required as a cofactor.

It is found in the cytoplasm. It catalyses the reaction diphosphate + H2O = 2 phosphate + H(+). Functionally, catalyzes the hydrolysis of inorganic pyrophosphate (PPi) forming two phosphate ions. In Helicobacter pylori (strain ATCC 700392 / 26695) (Campylobacter pylori), this protein is Inorganic pyrophosphatase.